The primary structure comprises 293 residues: Homoserine kinase (293 aa).

83–93 (PITRGMGSSSA) lines the ATP pocket.

This sequence belongs to the GHMP kinase family. Homoserine kinase subfamily.

It localises to the cytoplasm. It carries out the reaction L-homoserine + ATP = O-phospho-L-homoserine + ADP + H(+). The protein operates within amino-acid biosynthesis; L-threonine biosynthesis; L-threonine from L-aspartate: step 4/5. Its function is as follows. Catalyzes the ATP-dependent phosphorylation of L-homoserine to L-homoserine phosphate. This Helicobacter pylori (strain ATCC 700392 / 26695) (Campylobacter pylori) protein is Homoserine kinase.